The following is a 249-amino-acid chain: Formylaminopyrimidine import ATP-binding protein ThiZ (249 aa).

The ABC transporter domain occupies Leu6–Met228. Ala39–Ser46 serves as a coordination point for ATP.

Belongs to the ABC transporter superfamily. In terms of assembly, the complex is likely composed of an ATP-binding protein (ThiZ), a transmembrane protein (ThiX) and a solute-binding protein (ThiY).

The protein localises to the cell membrane. Its pathway is cofactor biosynthesis; thiamine diphosphate biosynthesis. Participates in a thiamine pyrimidine salvage pathway as part of the ABC transporter complex ThiXYZ involved in the import of thiamine degradation products such as the formylaminopyrimidine N-formyl-4-amino-5-aminomethyl-2-methylpyrimidine (FAMP). Is likely responsible for energy coupling to the transport system. This is Formylaminopyrimidine import ATP-binding protein ThiZ from Halalkalibacterium halodurans (strain ATCC BAA-125 / DSM 18197 / FERM 7344 / JCM 9153 / C-125) (Bacillus halodurans).